The chain runs to 69 residues: Alpha-elapitoxin-Lc2c (69 aa).

4 disulfides stabilise this stretch: C3–C20, C13–C41, C45–C56, and C57–C62.

The protein belongs to the three-finger toxin family. Long-chain subfamily. Type II alpha-neurotoxin sub-subfamily. As to expression, expressed by the venom gland.

The protein resides in the secreted. Binds with high affinity to muscular nicotinic acetylcholine receptors (nAChRs), whereas it binds with a low affinity to neuronal alpha-7/CHRNA7 nAChRs. The chain is Alpha-elapitoxin-Lc2c from Laticauda colubrina (Yellow-lipped sea krait).